A 616-amino-acid polypeptide reads, in one-letter code: Dihydroxy-acid dehydratase 1 (616 aa).

D81 lines the Mg(2+) pocket. C122 contributes to the [2Fe-2S] cluster binding site. 2 residues coordinate Mg(2+): D123 and K124. K124 is subject to N6-carboxylysine. C195 contributes to the [2Fe-2S] cluster binding site. A Mg(2+)-binding site is contributed by E491. The active-site Proton acceptor is the S517.

This sequence belongs to the IlvD/Edd family. Homodimer. It depends on [2Fe-2S] cluster as a cofactor. Mg(2+) serves as cofactor.

The catalysed reaction is (2R)-2,3-dihydroxy-3-methylbutanoate = 3-methyl-2-oxobutanoate + H2O. It carries out the reaction (2R,3R)-2,3-dihydroxy-3-methylpentanoate = (S)-3-methyl-2-oxopentanoate + H2O. The protein operates within amino-acid biosynthesis; L-isoleucine biosynthesis; L-isoleucine from 2-oxobutanoate: step 3/4. It functions in the pathway amino-acid biosynthesis; L-valine biosynthesis; L-valine from pyruvate: step 3/4. Functions in the biosynthesis of branched-chain amino acids. Catalyzes the dehydration of (2R,3R)-2,3-dihydroxy-3-methylpentanoate (2,3-dihydroxy-3-methylvalerate) into 2-oxo-3-methylpentanoate (2-oxo-3-methylvalerate) and of (2R)-2,3-dihydroxy-3-methylbutanoate (2,3-dihydroxyisovalerate) into 2-oxo-3-methylbutanoate (2-oxoisovalerate), the penultimate precursor to L-isoleucine and L-valine, respectively. This Bradyrhizobium diazoefficiens (strain JCM 10833 / BCRC 13528 / IAM 13628 / NBRC 14792 / USDA 110) protein is Dihydroxy-acid dehydratase 1.